The primary structure comprises 1259 residues: uncharacterized protein (1259 aa).

The segment at Lys354–Lys410 is disordered. The segment covering Arg362 to Lys410 has biased composition (low complexity).

Its subcellular location is the virion. This is an uncharacterized protein from Acanthamoeba polyphaga (Amoeba).